Here is a 549-residue protein sequence, read N- to C-terminus: Chaperonin GroEL (549 aa).

ATP-binding positions include 30-33 (TLGP), K51, 87-91 (DGTTT), G415, 479-481 (NAA), and D495.

It belongs to the chaperonin (HSP60) family. Forms a cylinder of 14 subunits composed of two heptameric rings stacked back-to-back. Interacts with the co-chaperonin GroES.

It localises to the cytoplasm. The catalysed reaction is ATP + H2O + a folded polypeptide = ADP + phosphate + an unfolded polypeptide.. Together with its co-chaperonin GroES, plays an essential role in assisting protein folding. The GroEL-GroES system forms a nano-cage that allows encapsulation of the non-native substrate proteins and provides a physical environment optimized to promote and accelerate protein folding. This Stenotrophomonas maltophilia (strain R551-3) protein is Chaperonin GroEL.